A 519-amino-acid chain; its full sequence is MPPKKKGKRGPSAKTKEKETVRVASEGVTEQTKDFYTVQIRDLEKRLERYQSKWDEICAKEQLKEAQYEQLSNDKKEIVSFLKRTLNQRMDEIADLNDQLLGLQQAKDAEKDAYESQLTQVRHELQDTKERLTSENMLLAGKLASLEEFRVQKEELMGKFAALEEKVKEQEQEHKEAMYILEKKVVLDKDRLKKEMVQRVSTVAAEFRRVSNNQMAETTKRAIRENVSISLQLDKMSDKSIELISENDLLKDRNSELTKQLEMLEENEKELVKNNLSNQKVIRMLTDKCQQQQEILTLLEHTQHALNELQSQHHNLKDESQQLKQKLVSLEDDLQRVTQEKEGLSRQLEEEKQRTLAVDMILSQAAAFLKDMLLTHSEDETEGMQLERRNKMLQQLQLLLDSSATLGLGSSLHEFETKQGHSLKSLKTNRQPVSPVLKGPGVTAHYRIGDLGLVPRQDVSNAVLSKTAMLSKITRLGPLRGTHGISKELLSWTQEEKQIKHSALPEISPGAPSKLLMAK.

A compositionally biased stretch (basic residues) spans 1–11 (MPPKKKGKRGP). A disordered region spans residues 1–25 (MPPKKKGKRGPSAKTKEKETVRVAS). 2 coiled-coil regions span residues 28-185 (VTEQ…EKKV) and 241-356 (IELI…QRTL).

The protein belongs to the CFAP157 family.

The protein resides in the cytoplasm. Its subcellular location is the cytoskeleton. The protein localises to the cilium basal body. Functionally, specifically required during spermatogenesis for flagellum morphogenesis and sperm motility. This is Cilia- and flagella-associated protein 157 from Xenopus tropicalis (Western clawed frog).